The sequence spans 116 residues: Protein Wnt-5a (116 aa).

The O-palmitoleoyl serine; by PORCN moiety is linked to residue serine 1. Residues asparagine 69 and asparagine 83 are each glycosylated (N-linked (GlcNAc...) asparagine). A disulfide bridge connects residues cysteine 82 and cysteine 97.

It belongs to the Wnt family. In terms of processing, palmitoleoylation is required for efficient binding to frizzled receptors. Depalmitoleoylation leads to Wnt signaling pathway inhibition.

Its subcellular location is the secreted. It localises to the extracellular space. The protein resides in the extracellular matrix. Ligand for members of the frizzled family of seven transmembrane receptors. Can activate or inhibit canonical Wnt signaling, depending on receptor context. Required during embryogenesis for extension of the primary anterior-posterior axis. This Plestiodon skiltonianus (Western skink) protein is Protein Wnt-5a (WNT-5A).